We begin with the raw amino-acid sequence, 475 residues long: ADP-ribose glycohydrolase MACROD2 (475 aa).

Residues 59-240 form the Macro domain; the sequence is QEAPQMKKSL…IYKKKMNEFF (182 aa). Substrate-binding positions include 77–79, 90–92, and 97–102; these read GDI, AAN, and GGGGVD. A Glycyl lysine isopeptide (Lys-Gly) (interchain with G-Cter in ubiquitin) cross-link involves residue Lys170. Residues 185 to 191 and Phe224 each bind substrate; that span reads ISTGIYG. Disordered regions lie at residues 241–306 and 324–475; these read PVDD…SQEA and GVNT…EDLQ. 2 stretches are compositionally biased toward basic and acidic residues: residues 251–261 and 335–359; these read ADMKEDSEGPE and SEDKAEVHKDEDSAKDDNTVKDSDM. Positions 360-375 are enriched in polar residues; the sequence is TNHSVCDQELPNGQEN. The span at 376–386 shows a compositional bias: basic and acidic residues; sequence DSAKSEGKTEA. Polar residues-rich tracts occupy residues 387–402 and 440–469; these read ESPSSSMETEDLSPNQ and SQGSSEAENTSGPDVDMNSQVDGVNEPTES.

Belongs to the MacroD-type family. MacroD1/2-like subfamily. As to quaternary structure, interacts with ADP-ribosylated PARP1. As to expression, expressed in the kidney.

Its subcellular location is the nucleus. The catalysed reaction is 2''-O-acetyl-ADP-D-ribose + H2O = ADP-D-ribose + acetate + H(+). The enzyme catalyses 4-O-(ADP-D-ribosyl)-L-aspartyl-[protein] + H2O = L-aspartyl-[protein] + ADP-D-ribose + H(+). It catalyses the reaction 5-O-(ADP-D-ribosyl)-L-glutamyl-[protein] + H2O = L-glutamyl-[protein] + ADP-D-ribose + H(+). It carries out the reaction alpha-NAD(+) + H2O = ADP-D-ribose + nicotinamide + H(+). Its activity is regulated as follows. Subject to product inhibition by ADP-ribose. In terms of biological role, removes ADP-ribose from aspartate and glutamate residues in proteins bearing a single ADP-ribose moiety. Inactive towards proteins bearing poly-ADP-ribose. Deacetylates O-acetyl-ADP ribose, a signaling molecule generated by the deacetylation of acetylated lysine residues in histones and other proteins. The sequence is that of ADP-ribose glycohydrolase MACROD2 from Mus musculus (Mouse).